The primary structure comprises 245 residues: Derlin-1 (245 aa).

Topologically, residues 1 to 5 (MDLEN) are cytoplasmic. The chain crosses the membrane as a helical span at residues 6–26 (FLLGIPIVTRYWFLASTIIPL). The Lumenal portion of the chain corresponds to 27–57 (LGRFGFINVQWMFLQWDLVVNKFQFWRPLTA). Residues 58–78 (LIYYPVTPQTGFHWLMMCYFL) form a helical membrane-spanning segment. Residues 79 to 100 (YNYSKALESETYRGRSADYLFM) lie on the Cytoplasmic side of the membrane. Residues 101-121 (LIFNWFFCSGLCMALDIYFLL) form a helical membrane-spanning segment. The Lumenal segment spans residues 122 to 166 (EPMVISVLYVWCQVNKDTIVSFWFGMRFPARYLPWVLWGFNAVLR). Residues 167–187 (GGGTNELVGILVGHAYFFVAL) traverse the membrane as a helical segment. Over 188–245 (KYPDEYGVDLISTPEFLHRLIPDEDGGIHGQDGNIRGARQQPRGHQWPGGVGARLGGN) the chain is Cytoplasmic. Residues 218-245 (QDGNIRGARQQPRGHQWPGGVGARLGGN) are disordered. Over residues 234-245 (WPGGVGARLGGN) the composition is skewed to gly residues.

It belongs to the derlin family.

It is found in the endoplasmic reticulum membrane. Its function is as follows. Specifically required for the degradation process of misfolded endoplasmic reticulum (ER) luminal proteins. Participates in the transfer of misfolded proteins from the ER to the cytosol, where they are destroyed by the proteasome in a ubiquitin-dependent manner. In Caenorhabditis elegans, this protein is Derlin-1.